The following is an 864-amino-acid chain: Leucine--tRNA ligase (864 aa).

A 'HIGH' region motif is present at residues 42-52 (PYPSGKLHMGH). Residues 622–626 (KMSKS) carry the 'KMSKS' region motif. Residue lysine 625 participates in ATP binding.

The protein belongs to the class-I aminoacyl-tRNA synthetase family.

The protein localises to the cytoplasm. It catalyses the reaction tRNA(Leu) + L-leucine + ATP = L-leucyl-tRNA(Leu) + AMP + diphosphate. The chain is Leucine--tRNA ligase from Cellvibrio japonicus (strain Ueda107) (Pseudomonas fluorescens subsp. cellulosa).